A 229-amino-acid polypeptide reads, in one-letter code: ATPase SWSAP1 (229 aa).

A disordered region spans residues 209-229 (PWPTQAGDPSSGKGSSSGGQP).

Interacts with ZSWIM7; they form a functional complex involved in homologous recombination repair and stabilize each other. Interacts with RAD51, RAD51B, RAD51C, RAD51D and XRCC3; involved in homologous recombination repair.

The protein localises to the nucleus. Its function is as follows. ATPase which is preferentially stimulated by single-stranded DNA and is involved in homologous recombination repair (HRR). Has a DNA-binding activity which is independent of its ATPase activity. In Homo sapiens (Human), this protein is ATPase SWSAP1 (SWSAP1).